Reading from the N-terminus, the 255-residue chain is Borealin-2 (255 aa).

Disordered stretches follow at residues 1–24 (MAPR…HSFE) and 107–156 (IQKP…STGS). Positions 124–135 (AGQQRSSSQSKT) are enriched in polar residues.

Belongs to the borealin family. In terms of assembly, component of the CPC complex.

The protein resides in the nucleus. It localises to the chromosome. Its subcellular location is the centromere. Functionally, component of the chromosomal passenger complex (CPC), a complex that acts as a key regulator of mitosis. The CPC complex has essential functions at the centromere in ensuring correct chromosome alignment and segregation and is required for chromatin-induced microtubule stabilization and spindle assembly. This chain is Borealin-2 (cdca9), found in Danio rerio (Zebrafish).